A 673-amino-acid chain; its full sequence is DNA ligase (673 aa).

NAD(+)-binding positions include 36–40 (DSEYD), 85–86 (SL), and E118. K120 serves as the catalytic N6-AMP-lysine intermediate. NAD(+) is bound by residues R141, E178, K295, and K319. Positions 413, 416, 431, and 437 each coordinate Zn(2+). The region spanning 596–673 (VRDNPLKGKT…SENEFLALLA (78 aa)) is the BRCT domain.

The protein belongs to the NAD-dependent DNA ligase family. LigA subfamily. Mg(2+) serves as cofactor. Mn(2+) is required as a cofactor.

It catalyses the reaction NAD(+) + (deoxyribonucleotide)n-3'-hydroxyl + 5'-phospho-(deoxyribonucleotide)m = (deoxyribonucleotide)n+m + AMP + beta-nicotinamide D-nucleotide.. In terms of biological role, DNA ligase that catalyzes the formation of phosphodiester linkages between 5'-phosphoryl and 3'-hydroxyl groups in double-stranded DNA using NAD as a coenzyme and as the energy source for the reaction. It is essential for DNA replication and repair of damaged DNA. This is DNA ligase from Histophilus somni (strain 129Pt) (Haemophilus somnus).